Here is a 562-residue protein sequence, read N- to C-terminus: Formate--tetrahydrofolate ligase (562 aa).

71–78 contributes to the ATP binding site; the sequence is TPAGEGKS.

The protein belongs to the formate--tetrahydrofolate ligase family.

The enzyme catalyses (6S)-5,6,7,8-tetrahydrofolate + formate + ATP = (6R)-10-formyltetrahydrofolate + ADP + phosphate. The protein operates within one-carbon metabolism; tetrahydrofolate interconversion. The sequence is that of Formate--tetrahydrofolate ligase from Bacillus cereus (strain AH187).